We begin with the raw amino-acid sequence, 390 residues long: Magnesium-protoporphyrin IX monomethyl ester [oxidative] cyclase (390 aa).

Residues 1–20 form a disordered region; that stretch reads MSQSTIESTNKKEINKGKAP.

This sequence belongs to the AcsF family. The cofactor is Fe cation.

It carries out the reaction Mg-protoporphyrin IX 13-monomethyl ester + 3 NADPH + 3 O2 + 2 H(+) = 3,8-divinyl protochlorophyllide a + 3 NADP(+) + 5 H2O. It functions in the pathway porphyrin-containing compound metabolism; chlorophyll biosynthesis (light-independent). Its function is as follows. Catalyzes the formation of the isocyclic ring in chlorophyll biosynthesis. Mediates the cyclase reaction, which results in the formation of divinylprotochlorophyllide (Pchlide) characteristic of all chlorophylls from magnesium-protoporphyrin IX 13-monomethyl ester (MgPMME). In Prochlorococcus marinus (strain MIT 9301), this protein is Magnesium-protoporphyrin IX monomethyl ester [oxidative] cyclase.